Reading from the N-terminus, the 218-residue chain is Oocyte-specific homeobox protein 7 (218 aa).

The segment covering 40 to 72 (SPLVTPGSTMQSSLSVPERNLLQQESEGPSRQS) has biased composition (polar residues). Residues 40–77 (SPLVTPGSTMQSSLSVPERNLLQQESEGPSRQSGCMPL) are disordered. Positions 94–153 (FRKERIVYSKEQQRLLQKHFDECQYPKEKKIVELAVLIGVTKMEIKKWFKNNRAKYRQMN) form a DNA-binding region, homeobox.

It belongs to the paired homeobox family. Obox subfamily. In terms of tissue distribution, specifically expressed in oocytes and early embryos.

Its subcellular location is the nucleus. Its function is as follows. Transcription factor required for zygotic genome activation (ZGA), a critical event in early embryonic development during which the developmental control passes from maternally provided mRNAs to the expression of the zygotic genome after fertilization. Together with other Obox family members, required in early two-cell stage embryos to kick-start the major ZGA wave by facilitating RNA Polymerase II 'pre-configuration', during which RNA Polymerase II relocates from the initial one-cell stage binding targets to ZGA gene promoters and distal enhancers. Mechanistically, promotes recruitment of RNA Polymerase II from (CG-rich) non-ZGA genes to (CG-poor) ZGA genes at the two-cell stage. Binds to regulatory DNA sequences containing a 5'-ACNCCTTTAATCCCAG-3' sequence motif. Most maternal and zygotic Obox family proteins can compensate for one another. This is Oocyte-specific homeobox protein 7 from Mus musculus (Mouse).